We begin with the raw amino-acid sequence, 185 residues long: HTH-type transcriptional regulator SAB2452 (185 aa).

The HTH tetR-type domain occupies 6–66 (IENRQRIEEI…YVIQRDLNTF (61 aa)). The segment at residues 29–48 (SMNRIAKELGIGMGTLYRHF) is a DNA-binding region (H-T-H motif).

The polypeptide is HTH-type transcriptional regulator SAB2452 (Staphylococcus aureus (strain bovine RF122 / ET3-1)).